A 298-amino-acid polypeptide reads, in one-letter code: MSEFKVKTGLAQMLKGGVIMDVVTPEQAIIAERAGACAVMALERIPADMRKSGQVCRMSDPRMIKEIMEAVSIPVMAKVRIGHFVEAQILEELQVDYIDESEVLTPADWTHHIEKHNFKVPFVCGAKDLGEALRRINEGAAMIRTKGEAGTGDVSEAVKHITKIKAEIQQYKENLKTESDFAAKATELRVPVDLLKTTLSEGKLPVVNFAAGGVATPADAALLMQLGCEGVFVGSGIFKSSDPEKLACAIVEATTHYDNPAKLLQISSDLGDLMGGISIQSINEAGGKNGARLSEIGW.

Position 21 (Asp-21) interacts with D-ribose 5-phosphate. The active-site Schiff-base intermediate with D-ribose 5-phosphate is the Lys-78. Residues Gly-150, Gly-213, and 234–235 (GS) each bind D-ribose 5-phosphate.

It belongs to the PdxS/SNZ family. As to quaternary structure, homohexamer. Interacts with THI11.

The catalysed reaction is aldehydo-D-ribose 5-phosphate + D-glyceraldehyde 3-phosphate + L-glutamine = pyridoxal 5'-phosphate + L-glutamate + phosphate + 3 H2O + H(+). It functions in the pathway cofactor biosynthesis; pyridoxal 5'-phosphate biosynthesis. Catalyzes the formation of pyridoxal 5'-phosphate from ribose 5-phosphate (RBP), glyceraldehyde 3-phosphate (G3P) and ammonia. The ammonia is provided by a SNO isoform. Can also use ribulose 5-phosphate and dihydroxyacetone phosphate as substrates, resulting from enzyme-catalyzed isomerization of RBP and G3P, respectively. The protein is Probable pyridoxal 5'-phosphate synthase subunit SNZ2 (SNZ2) of Saccharomyces cerevisiae (strain ATCC 204508 / S288c) (Baker's yeast).